We begin with the raw amino-acid sequence, 133 residues long: Small ribosomal subunit protein uS8 (133 aa).

It belongs to the universal ribosomal protein uS8 family. As to quaternary structure, part of the 30S ribosomal subunit.

In terms of biological role, one of the primary rRNA binding proteins, it binds directly to 16S rRNA central domain where it helps coordinate assembly of the platform of the 30S subunit. This chain is Small ribosomal subunit protein uS8, found in Hyperthermus butylicus (strain DSM 5456 / JCM 9403 / PLM1-5).